A 194-amino-acid chain; its full sequence is NADH-quinone oxidoreductase subunit B (194 aa).

[4Fe-4S] cluster contacts are provided by cysteine 73, cysteine 74, cysteine 138, and cysteine 168.

This sequence belongs to the complex I 20 kDa subunit family. NDH-1 is composed of 14 different subunits. Subunits NuoB, C, D, E, F, and G constitute the peripheral sector of the complex. [4Fe-4S] cluster is required as a cofactor.

The protein localises to the cell inner membrane. The catalysed reaction is a quinone + NADH + 5 H(+)(in) = a quinol + NAD(+) + 4 H(+)(out). In terms of biological role, NDH-1 shuttles electrons from NADH, via FMN and iron-sulfur (Fe-S) centers, to quinones in the respiratory chain. The immediate electron acceptor for the enzyme in this species is believed to be ubiquinone. Couples the redox reaction to proton translocation (for every two electrons transferred, four hydrogen ions are translocated across the cytoplasmic membrane), and thus conserves the redox energy in a proton gradient. This is NADH-quinone oxidoreductase subunit B from Rhizobium johnstonii (strain DSM 114642 / LMG 32736 / 3841) (Rhizobium leguminosarum bv. viciae).